Consider the following 786-residue polypeptide: Constitutive coactivator of peroxisome proliferator-activated receptor gamma (786 aa).

Positions 1–561 (MGVRGLQGFV…GTPSLEVLWL (561 aa)) are mediates transactivation of PPARG. 2 disordered regions span residues 371 to 413 (PNQE…KLPS) and 738 to 786 (HWDS…WRRY). The span at 750–771 (QGYSSYRTDSTHGHSGQSWRNQ) shows a compositional bias: polar residues.

The protein belongs to the constitutive coactivator of PPAR-gamma family. In terms of assembly, interacts with ESR1 and RXRA. Interacts with PPARG; in a ligand-independent manner. Ubiquitously expressed (at protein level).

It localises to the nucleus. In terms of biological role, functions as a transactivator of PPARG and ESR1. Functions in adipogenesis through PPARG activation. This is Constitutive coactivator of peroxisome proliferator-activated receptor gamma (Fam120b) from Mus musculus (Mouse).